Here is a 31-residue protein sequence, read N- to C-terminus: Conotoxin pc6b (31 aa).

3 disulfide bridges follow: cysteine 2–cysteine 20, cysteine 9–cysteine 25, and cysteine 19–cysteine 29.

This sequence belongs to the conotoxin O1 superfamily. Expressed by the venom duct.

It is found in the secreted. The protein is Conotoxin pc6b of Conus pictus (Cone snail).